Here is a 316-residue protein sequence, read N- to C-terminus: Phosphate acetyltransferase (316 aa).

Belongs to the phosphate acetyltransferase and butyryltransferase family.

It is found in the cytoplasm. The catalysed reaction is acetyl-CoA + phosphate = acetyl phosphate + CoA. It participates in metabolic intermediate biosynthesis; acetyl-CoA biosynthesis; acetyl-CoA from acetate: step 2/2. This Rhizobium meliloti (Ensifer meliloti) protein is Phosphate acetyltransferase (pta).